The chain runs to 364 residues: Protein FAM81A (364 aa).

Positions 80 to 107 form a coiled coil; sequence IRNITAIVKQLNRDIEVLQEQIRARDNI. Positions 275–300 are enriched in basic and acidic residues; it reads ARLDKIEESQRRNAEGQRKPEEEKVH. The interval 275-301 is disordered; it reads ARLDKIEESQRRNAEGQRKPEEEKVHG.

Belongs to the FAM81 family. In terms of assembly, interacts with DLG4/PSD-95, GRIN2B/GLUN2B and SYNGAP1; the interactions facilitate condensate formation. In terms of tissue distribution, highly expressed in brain (at protein level).

The protein localises to the postsynaptic density. Its subcellular location is the cytoplasm. Facilitates the interaction and assembly of proteins within the postsynaptic density by promoting the condensation of postsynaptic proteins via liquid-liquid phase separation. Required for neuronal activity. Accumulation at the postsynaptic density results in enlargement of dendritic spines. This Rattus norvegicus (Rat) protein is Protein FAM81A.